Consider the following 355-residue polypeptide: Green-sensitive opsin (355 aa).

Residues methionine 1–lysine 36 lie on the Extracellular side of the membrane. 2 N-linked (GlcNAc...) asparagine glycosylation sites follow: asparagine 2 and asparagine 15. A helical membrane pass occupies residues tyrosine 37 to valine 61. The Cytoplasmic portion of the chain corresponds to threonine 62–asparagine 73. Residues tyrosine 74–tryptophan 99 traverse the membrane as a helical segment. Residues asparagine 100 to glutamate 113 lie on the Extracellular side of the membrane. Cysteine 110 and cysteine 187 are oxidised to a cystine. A helical transmembrane segment spans residues glycine 114–isoleucine 133. Over glutamate 134 to histidine 152 the chain is Cytoplasmic. A helical membrane pass occupies residues alanine 153–serine 176. The Extracellular segment spans residues arginine 177–serine 202. The helical transmembrane segment at tyrosine 203–valine 230 threads the bilayer. Topologically, residues arginine 231 to arginine 252 are cytoplasmic. Residues methionine 253–phenylalanine 276 form a helical membrane-spanning segment. The Extracellular segment spans residues threonine 277–threonine 284. The chain crosses the membrane as a helical span at residues alanine 285–methionine 309. Lysine 296 carries the N6-(retinylidene)lysine modification. The Cytoplasmic portion of the chain corresponds to asparagine 310–alanine 355.

This sequence belongs to the G-protein coupled receptor 1 family. Opsin subfamily. In terms of processing, phosphorylated on some or all of the serine and threonine residues present in the C-terminal region. In terms of tissue distribution, the color pigments are found in the cone photoreceptor cells.

It localises to the membrane. Its function is as follows. Visual pigments are the light-absorbing molecules that mediate vision. They consist of an apoprotein, opsin, covalently linked to cis-retinal. The protein is Green-sensitive opsin (PRA1) of Gallus gallus (Chicken).